The primary structure comprises 260 residues: 2-amino-5-formylamino-6-ribosylaminopyrimidin-4(3H)-one 5'-monophosphate deformylase (260 aa).

The Fe cation site is built by glutamate 33, histidine 35, aspartate 44, and histidine 112.

It belongs to the creatininase superfamily. FAPy deformylase family. In terms of assembly, homodimer. Requires Fe(2+) as cofactor. Zn(2+) serves as cofactor.

The enzyme catalyses 2-amino-5-formylamino-6-(5-phospho-D-ribosylamino)pyrimidin-4(3H)-one + H2O = 2,5-diamino-6-(1-D-ribosylamino)pyrimidin-4(3H)-one 5'-phosphate + formate + H(+). It participates in cofactor biosynthesis; coenzyme F420 biosynthesis. It functions in the pathway cofactor biosynthesis; riboflavin biosynthesis. In terms of biological role, catalyzes the hydrolysis of the formamide of 2-amino-5-formylamino-6-ribosylamino-4(3H)-pyrimidinone 5'-monophosphate (FAPy) to form 2,5-diamino-6-ribosylamino-4(3H)-pyrimidinone 5'-phosphate (APy). The polypeptide is 2-amino-5-formylamino-6-ribosylaminopyrimidin-4(3H)-one 5'-monophosphate deformylase (Methanococcus voltae (strain ATCC BAA-1334 / A3)).